Consider the following 559-residue polypeptide: Actin-binding protein WASF1 (559 aa).

3 disordered regions span residues 169-202, 307-400, and 412-492; these read TEDK…DRRR, RPQS…SPPV, and VHPL…STLP. Positions 182–202 are enriched in basic and acidic residues; sequence KNLDRPHEPEKVPRAPHDRRR. Residues 322–332 show a composition bias toward pro residues; that stretch reads PTPPPPPPPLP. Positions 333 to 346 are enriched in low complexity; sequence SALSTSSLRASMTS. Position 341 is an asymmetric dimethylarginine; alternate (R341). Position 341 is an omega-N-methylarginine; alternate (R341). Composition is skewed to pro residues over residues 347 to 374, 384 to 399, 423 to 437, and 458 to 477; these read TPPP…PPAP, PAPP…PSPP, LPPP…PPGI, and TPSP…PPSQ. S489 carries the post-translational modification Phosphoserine. The region spanning 497–514 is the WH2 domain; the sequence is ARSVLLEAIRKGIQLRKV.

Belongs to the SCAR/WAVE family. As to quaternary structure, component of the WAVE1 complex composed of ABI2, CYFIP1 or CYFIP2, BRK1, NCKAP1 and WASF1/WAVE1. Within the complex, a heterodimer containing NCKAP1 and CYFIP1 interacts with a heterotrimer formed by WAVE1, ABI2 and BRK1. CYFIP2 binds to activated RAC1 which causes the complex to dissociate, releasing activated WASF1. The complex can also be activated by NCK1. Binds actin and the Arp2/3 complex. Interacts with BAIAP2. Interacts with SHANK3; the interaction mediates the association of SHANK3 with the WAVE1 complex. Interacts with ABI1 (via N-terminus). Interacts with SORBS2; this interaction greatly enhances phosphorylation by ABL1 and dephosphorylation by PTPN12 and might mediate partial to focal adhesion sites. Expressed in hippocampal neurons (at protein level).

The protein resides in the cytoplasm. It localises to the cytoskeleton. Its subcellular location is the synapse. It is found in the cell junction. The protein localises to the focal adhesion. Downstream effector molecule involved in the transmission of signals from tyrosine kinase receptors and small GTPases to the actin cytoskeleton. Promotes formation of actin filaments. Part of the WAVE complex that regulates lamellipodia formation. The WAVE complex regulates actin filament reorganization via its interaction with the Arp2/3 complex. As component of the WAVE1 complex, required for BDNF-NTRK2 endocytic trafficking and signaling from early endosomes. Also involved in the regulation of mitochondrial dynamics. The polypeptide is Actin-binding protein WASF1 (Wasf1) (Rattus norvegicus (Rat)).